The following is a 199-amino-acid chain: Peroxisomal membrane protein PEX17 (199 aa).

Its subcellular location is the peroxisome membrane. Component of the peroxisomal translocation machinery with PEX13 and PEX14. Interacts indirectly with the PTS1 receptor (PAS10/PEX5) and directly binds to PEX14. Required for import of both PTS1 and PTS2 proteins. The sequence is that of Peroxisomal membrane protein PEX17 (PEX17) from Saccharomyces cerevisiae (strain ATCC 204508 / S288c) (Baker's yeast).